The following is a 400-amino-acid chain: Inositol polyphosphate 1-phosphatase (400 aa).

Aspartate 54 provides a ligand contact to Li(+). Glutamate 79 lines the Mg(2+) pocket. A Li(+)-binding site is contributed by glutamate 80. Mg(2+)-binding residues include aspartate 153 and isoleucine 155. Positions 156, 157, and 158 each coordinate 1D-myo-inositol 1,4-bisphosphate. Over residues serine 238–glycine 257 the composition is skewed to polar residues. The tract at residues serine 238–serine 258 is disordered. The 1D-myo-inositol 1,4-bisphosphate site is built by serine 268, lysine 270, glycine 290, alanine 291, lysine 294, and threonine 312. Residue aspartate 317 coordinates Mg(2+). Serine 318 bears the Phosphoserine mark.

The protein belongs to the inositol monophosphatase superfamily. In terms of assembly, monomer. Mg(2+) serves as cofactor.

It carries out the reaction 1D-myo-inositol 1,4-bisphosphate + H2O = 1D-myo-inositol 4-phosphate + phosphate. The catalysed reaction is 1D-myo-inositol 1,3,4-trisphosphate + H2O = 1D-myo-inositol 3,4-bisphosphate + phosphate. It participates in signal transduction; phosphatidylinositol signaling pathway. Its activity is regulated as follows. Inhibited by Li(+). Functionally, mg(2+)-dependent phosphatase that catalyzes the hydrolysis of the 1-position phosphate from inositol 1,4-bisphosphate and inositol 1,3,4-trisphosphate and participates in inositol phosphate metabolism. The polypeptide is Inositol polyphosphate 1-phosphatase (Bos taurus (Bovine)).